A 188-amino-acid polypeptide reads, in one-letter code: Protein GrpE (188 aa).

A disordered region spans residues 1 to 22 (MADEQTLDTQNLDANQAPEASG).

The protein belongs to the GrpE family. In terms of assembly, homodimer.

The protein localises to the cytoplasm. In terms of biological role, participates actively in the response to hyperosmotic and heat shock by preventing the aggregation of stress-denatured proteins, in association with DnaK and GrpE. It is the nucleotide exchange factor for DnaK and may function as a thermosensor. Unfolded proteins bind initially to DnaJ; upon interaction with the DnaJ-bound protein, DnaK hydrolyzes its bound ATP, resulting in the formation of a stable complex. GrpE releases ADP from DnaK; ATP binding to DnaK triggers the release of the substrate protein, thus completing the reaction cycle. Several rounds of ATP-dependent interactions between DnaJ, DnaK and GrpE are required for fully efficient folding. The polypeptide is Protein GrpE (Pseudomonas fluorescens (strain ATCC BAA-477 / NRRL B-23932 / Pf-5)).